A 267-amino-acid polypeptide reads, in one-letter code: Undecaprenyl-diphosphatase (267 aa).

Transmembrane regions (helical) follow at residues 1-21 (MSYFEAFILALIQGLTEFLPI), 39-59 (QGLAFDVAVHVGTLMAVVIYF), 83-103 (AKLAWMIVIATIPACVFGLLM), 111-131 (LRSAYVIATTTIVFGLLLWWV), 144-164 (TGWKKAVFIGIAQALAMIPGT), 189-209 (FLMSIPIITLAGSYLGMKLVT), 218-238 (FLLTGILTSFISAYICIHFFL), and 245-265 (GMTPFVIYRLILGVGLFAFLL).

The protein belongs to the UppP family.

It localises to the cell inner membrane. The catalysed reaction is di-trans,octa-cis-undecaprenyl diphosphate + H2O = di-trans,octa-cis-undecaprenyl phosphate + phosphate + H(+). Functionally, catalyzes the dephosphorylation of undecaprenyl diphosphate (UPP). Confers resistance to bacitracin. The polypeptide is Undecaprenyl-diphosphatase (Vibrio parahaemolyticus serotype O3:K6 (strain RIMD 2210633)).